We begin with the raw amino-acid sequence, 334 residues long: Adenosine deaminase (334 aa).

Residues His16 and His18 each contribute to the Zn(2+) site. His18, Asp20, and Gly173 together coordinate substrate. Zn(2+) is bound at residue His200. The active-site Proton donor is the Glu203. Position 281 (Asp281) interacts with Zn(2+).

It belongs to the metallo-dependent hydrolases superfamily. Adenosine and AMP deaminases family. Adenosine deaminase subfamily. Zn(2+) is required as a cofactor.

The enzyme catalyses adenosine + H2O + H(+) = inosine + NH4(+). It carries out the reaction 2'-deoxyadenosine + H2O + H(+) = 2'-deoxyinosine + NH4(+). Its function is as follows. Catalyzes the hydrolytic deamination of adenosine and 2-deoxyadenosine. The sequence is that of Adenosine deaminase from Clostridium acetobutylicum (strain ATCC 824 / DSM 792 / JCM 1419 / IAM 19013 / LMG 5710 / NBRC 13948 / NRRL B-527 / VKM B-1787 / 2291 / W).